We begin with the raw amino-acid sequence, 129 residues long: Small ribosomal subunit protein uS8 (129 aa).

The protein belongs to the universal ribosomal protein uS8 family. As to quaternary structure, part of the 30S ribosomal subunit. Contacts proteins S5 and S12.

In terms of biological role, one of the primary rRNA binding proteins, it binds directly to 16S rRNA central domain where it helps coordinate assembly of the platform of the 30S subunit. This chain is Small ribosomal subunit protein uS8, found in Mycoplasma mycoides subsp. mycoides SC (strain CCUG 32753 / NCTC 10114 / PG1).